The sequence spans 156 residues: Small ribosomal subunit protein uS7 (156 aa).

This sequence belongs to the universal ribosomal protein uS7 family. Part of the 30S ribosomal subunit. Contacts proteins S9 and S11.

In terms of biological role, one of the primary rRNA binding proteins, it binds directly to 16S rRNA where it nucleates assembly of the head domain of the 30S subunit. Is located at the subunit interface close to the decoding center, probably blocks exit of the E-site tRNA. This Synechococcus sp. (strain CC9311) protein is Small ribosomal subunit protein uS7.